Here is a 200-residue protein sequence, read N- to C-terminus: Thymidine kinase (200 aa).

ATP-binding positions include 15–22 (GSMFSGKS) and 88–91 (DEVQ). E89 functions as the Proton acceptor in the catalytic mechanism. Positions 145, 148, 183, and 186 each coordinate Zn(2+).

This sequence belongs to the thymidine kinase family. Homotetramer.

Its subcellular location is the cytoplasm. It carries out the reaction thymidine + ATP = dTMP + ADP + H(+). The sequence is that of Thymidine kinase from Bacillus pumilus (strain SAFR-032).